A 93-amino-acid chain; its full sequence is Putative aspartate aminotransferase (93 aa).

It belongs to the class-I pyridoxal-phosphate-dependent aminotransferase family. Homodimer. The cofactor is pyridoxal 5'-phosphate.

The protein localises to the cytoplasm. It catalyses the reaction L-aspartate + 2-oxoglutarate = oxaloacetate + L-glutamate. This Methylorubrum extorquens (Methylobacterium dichloromethanicum) protein is Putative aspartate aminotransferase.